Reading from the N-terminus, the 421-residue chain is tRNA (guanine-N(7)-)-methyltransferase non-catalytic subunit TRM82 (421 aa).

WD repeat units follow at residues 72-112 (AVYS…EDPE), 170-212 (GHVS…IVDK), and 216-258 (GHKE…SQYS).

The protein belongs to the WD repeat TRM82 family. As to quaternary structure, forms a heterodimer with the catalytic subunit TRM8.

Its subcellular location is the nucleus. Its pathway is tRNA modification; N(7)-methylguanine-tRNA biosynthesis. Its function is as follows. Required for the formation of N(7)-methylguanine at position 46 (m7G46) in tRNA. In the complex, it is required to stabilize and induce conformational changes of the catalytic subunit. This Candida glabrata (strain ATCC 2001 / BCRC 20586 / JCM 3761 / NBRC 0622 / NRRL Y-65 / CBS 138) (Yeast) protein is tRNA (guanine-N(7)-)-methyltransferase non-catalytic subunit TRM82.